A 209-amino-acid polypeptide reads, in one-letter code: Large ribosomal subunit protein uL3 (209 aa).

Belongs to the universal ribosomal protein uL3 family. Part of the 50S ribosomal subunit. Forms a cluster with proteins L14 and L19.

Functionally, one of the primary rRNA binding proteins, it binds directly near the 3'-end of the 23S rRNA, where it nucleates assembly of the 50S subunit. The protein is Large ribosomal subunit protein uL3 of Oceanobacillus iheyensis (strain DSM 14371 / CIP 107618 / JCM 11309 / KCTC 3954 / HTE831).